The primary structure comprises 444 residues: Argininosuccinate synthase (444 aa).

ATP contacts are provided by residues 17–25 (AFSGGLDTS) and A43. L-citrulline is bound at residue Y99. ATP contacts are provided by G129 and T131. L-aspartate is bound by residues T131, N135, and D136. N135 is an L-citrulline binding site. ATP is bound at residue D136. R139 and S192 together coordinate L-citrulline. D194 is a binding site for ATP. L-citrulline contacts are provided by T201, E203, and E280.

The protein belongs to the argininosuccinate synthase family. Type 2 subfamily. Homotetramer.

Its subcellular location is the cytoplasm. The catalysed reaction is L-citrulline + L-aspartate + ATP = 2-(N(omega)-L-arginino)succinate + AMP + diphosphate + H(+). It participates in amino-acid biosynthesis; L-arginine biosynthesis; L-arginine from L-ornithine and carbamoyl phosphate: step 2/3. This is Argininosuccinate synthase from Paraburkholderia phymatum (strain DSM 17167 / CIP 108236 / LMG 21445 / STM815) (Burkholderia phymatum).